The following is a 148-amino-acid chain: MFDPTLLILLALAALGFISHNTTVAISILVLIIVRVTPLNTFFPWIEKQGLTIGIIILTIGVMAPIASGTLPASTLLHSFVNWKSLIAIAVGVFVSWLGGRGVTLMSSQPSLVAGLLVGTVLGVALFRGVPVGPLIAAGLVSLFIGKS.

Helical transmembrane passes span 14–34 (ALGFISHNTTVAISILVLIIV), 51–71 (LTIGIIILTIGVMAPIASGTL), 86–106 (LIAIAVGVFVSWLGGRGVTLM), and 121–141 (VLGVALFRGVPVGPLIAAGLV).

Belongs to the UPF0756 family.

It localises to the cell membrane. The protein is UPF0756 membrane protein Ent638_1667 of Enterobacter sp. (strain 638).